The chain runs to 152 residues: MKCPSCQHNGTRVLDSRPVDDGKSIRRRRECESCHYRFTTFEKVEETPLIVVKKEGVREEFSREKMLRGLIKACEKRPVSLKTLEDMCFDIEKELRNQGCSEVKSELVGEMVMDRLAKIDEVAYVRFASVYRQFKDINVFIDELKDLIKKER.

Residues 3-34 fold into a zinc finger; the sequence is CPSCQHNGTRVLDSRPVDDGKSIRRRRECESC. The ATP-cone domain maps to 49 to 139; sequence LIVVKKEGVR…VYRQFKDINV (91 aa).

The protein belongs to the NrdR family. Zn(2+) is required as a cofactor.

Functionally, negatively regulates transcription of bacterial ribonucleotide reductase nrd genes and operons by binding to NrdR-boxes. In Bacillus subtilis (strain 168), this protein is Transcriptional repressor NrdR.